Consider the following 273-residue polypeptide: Putative phosphoenolpyruvate synthase regulatory protein (273 aa).

153–160 contacts ADP; the sequence is GVSRCGKT.

The protein belongs to the pyruvate, phosphate/water dikinase regulatory protein family. PSRP subfamily.

It catalyses the reaction [pyruvate, water dikinase] + ADP = [pyruvate, water dikinase]-phosphate + AMP + H(+). The enzyme catalyses [pyruvate, water dikinase]-phosphate + phosphate + H(+) = [pyruvate, water dikinase] + diphosphate. Its function is as follows. Bifunctional serine/threonine kinase and phosphorylase involved in the regulation of the phosphoenolpyruvate synthase (PEPS) by catalyzing its phosphorylation/dephosphorylation. This Yersinia pseudotuberculosis serotype I (strain IP32953) protein is Putative phosphoenolpyruvate synthase regulatory protein.